A 419-amino-acid chain; its full sequence is Isocitrate dehydrogenase [NADP] (419 aa).

Thr-102 contributes to the NADP(+) binding site. Residues Ser-111, Asn-113, Arg-117, Arg-127, and Arg-151 each contribute to the D-threo-isocitrate site. Asp-306 lines the Mg(2+) pocket. NADP(+) contacts are provided by residues 338 to 344, Asn-351, Tyr-390, and Arg-394; that span reads HGSAPKY.

The protein belongs to the isocitrate and isopropylmalate dehydrogenases family. Homodimer. Requires Mg(2+) as cofactor. The cofactor is Mn(2+).

It catalyses the reaction D-threo-isocitrate + NADP(+) = 2-oxoglutarate + CO2 + NADPH. In terms of biological role, catalyzes the oxidative decarboxylation of isocitrate to 2-oxoglutarate and carbon dioxide with the concomitant reduction of NADP(+). This Haloferax volcanii (strain ATCC 29605 / DSM 3757 / JCM 8879 / NBRC 14742 / NCIMB 2012 / VKM B-1768 / DS2) (Halobacterium volcanii) protein is Isocitrate dehydrogenase [NADP].